The chain runs to 295 residues: F-box only protein 8 (295 aa).

The F-box domain maps to 35–80; that stretch reads TWVARYIPQDLLIEILTRLPPKSVMRFKCVSKFWSSLLSSRYFCNR.

The chain is F-box only protein 8 (FBX8) from Arabidopsis thaliana (Mouse-ear cress).